The following is a 315-amino-acid chain: MTIVHRRLALAIGDPHGIGPEIALKALRQLSANERSLIKVYGPWSALEQAAQICQMESLLQDLIHEEAGSLAQPAQWGEITPQAGLSTVQSATAAIRACENGEVDAVIACPHHETAIHRAGIAFSGYPSLLANVLGMNEDQVFLMLVGAGLRIVHVTLHESVRSALERLSPQLVVNAVQAAVQTCTLLGVPKPQVAVFGINPHASEGQLFGLEDSQITAPAVETLRKCGLAVDGPMGADMVLAQRKHDLYVAMLHDQGHIPIKLLAPNGASALSIGGRVVLSSVGHGSAMDIAGRGVADSTALLRTIALLGAQPG.

A divalent metal cation-binding residues include His159, His203, and His255.

This sequence belongs to the PdxA family.

It catalyses the reaction (3S,4R)-3,4-dihydroxycyclohexa-1,5-diene-1,4-dicarboxylate + NAD(+) = 3,4-dihydroxybenzoate + CO2 + NADH. Functionally, involved in the degradation of terephthalate (TPA) via the protocatechuate (PCA) 4,5-cleavage pathway. Catalyzes the dehydrogenation of 1,2-dihydroxy-3,5-cyclohexadiene-1,4-dicarboxylate (DCD) to yield protocatechuate (PCA). The polypeptide is 1,2-dihydroxy-3,5-cyclohexadiene-1,4-dicarboxylate dehydrogenase (tphBI) (Comamonas sp).